A 709-amino-acid chain; its full sequence is Protein SOSEKI 3 (709 aa).

A DIX-like oligomerization domain region spans residues 8 to 101 (SSVQVLYQLS…YVLRASELFD (94 aa)). Disordered stretches follow at residues 242–266 (LHTP…AKRM), 315–344 (RDGR…AEQS), 358–393 (GGSS…KTPC), 411–439 (PSPA…NRPS), and 506–560 (DSPT…DTKP). Residues 329–342 (ELREVQNEKEKEAE) are compositionally biased toward basic and acidic residues. Over residues 417–436 (NKAHSSLDRQEIPPQEECKN) the composition is skewed to basic and acidic residues. A compositionally biased stretch (polar residues) spans 529–544 (VKTSNSLPRVKTTTSP). The C2HC/C3H-type zinc-finger motif lies at 663-692 (ILQECSTCGRTFKPDSLQVHMRGCHPPQYA). 4 residues coordinate Zn(2+): Cys667, Cys670, His682, and Cys686.

It belongs to the SOSEKI family. As to quaternary structure, homodimer. Forms long polymer filaments with other SOKs proteins polymers crucial for polar localization and biological activity. Zn(2+) is required as a cofactor.

It is found in the cell membrane. In terms of biological role, SOSEKI proteins locally interpret global polarity cues and can influence cell division orientation to coordinate cell polarization relative to body axes. In Physcomitrium patens (Spreading-leaved earth moss), this protein is Protein SOSEKI 3.